A 217-amino-acid chain; its full sequence is Protein dao-4 (217 aa).

Positions 1-21 (MKIALYSILLITVCYLSSTDA) are cleaved as a signal peptide.

The protein resides in the nucleus. It localises to the secreted. Its function is as follows. Probably acts downstream of the Wnt signaling pathway. The sequence is that of Protein dao-4 from Caenorhabditis elegans.